The following is a 358-amino-acid chain: Peptide chain release factor 1 (358 aa).

An N5-methylglutamine modification is found at Q233.

The protein belongs to the prokaryotic/mitochondrial release factor family. Post-translationally, methylated by PrmC. Methylation increases the termination efficiency of RF1.

The protein localises to the cytoplasm. In terms of biological role, peptide chain release factor 1 directs the termination of translation in response to the peptide chain termination codons UAG and UAA. The protein is Peptide chain release factor 1 of Staphylococcus carnosus (strain TM300).